A 462-amino-acid chain; its full sequence is ATP synthase subunit beta (462 aa).

ATP is bound at residue glycine 150–threonine 157.

The protein belongs to the ATPase alpha/beta chains family. F-type ATPases have 2 components, CF(1) - the catalytic core - and CF(0) - the membrane proton channel. CF(1) has five subunits: alpha(3), beta(3), gamma(1), delta(1), epsilon(1). CF(0) has three main subunits: a(1), b(2) and c(9-12). The alpha and beta chains form an alternating ring which encloses part of the gamma chain. CF(1) is attached to CF(0) by a central stalk formed by the gamma and epsilon chains, while a peripheral stalk is formed by the delta and b chains. In this bacterium the a and b subunits are transcribed but do not seem to be translated, thus the ATP synthase consists of the alpha, beta, gamma, delta, epsilon and c subunits.

Its subcellular location is the cell membrane. The enzyme catalyses ATP + H2O + 4 H(+)(in) = ADP + phosphate + 5 H(+)(out). In terms of biological role, produces ATP from ADP in the presence of a proton gradient across the membrane. The catalytic sites are hosted primarily by the beta subunits. This Moorella thermoacetica (strain ATCC 39073 / JCM 9320) protein is ATP synthase subunit beta.